The chain runs to 454 residues: UDP-glycosyltransferase 79A2 (454 aa).

Residues Ser-269, 330–331 (WV), 348–356 (HAGYGSVIE), and 370–373 (KVDQ) contribute to the UDP-alpha-D-glucose site.

Belongs to the UDP-glycosyltransferase family.

Functionally, may glycosylate diterpenes or flavonols in leaves. This chain is UDP-glycosyltransferase 79A2, found in Stevia rebaudiana (Stevia).